We begin with the raw amino-acid sequence, 557 residues long: 2-isopropylmalate synthase (557 aa).

One can recognise a Pyruvate carboxyltransferase domain in the interval 33-307; the sequence is PLWLSTDLRD…DPGLDFSDID (275 aa). The Mg(2+) site is built by Asp42, His246, His248, and Asn282. A regulatory domain region spans residues 439-557; that stretch reads AETPYALKGH…LGQQASIRAA (119 aa).

This sequence belongs to the alpha-IPM synthase/homocitrate synthase family. LeuA type 2 subfamily. Homodimer. Mg(2+) serves as cofactor.

The protein localises to the cytoplasm. The enzyme catalyses 3-methyl-2-oxobutanoate + acetyl-CoA + H2O = (2S)-2-isopropylmalate + CoA + H(+). Its pathway is amino-acid biosynthesis; L-leucine biosynthesis; L-leucine from 3-methyl-2-oxobutanoate: step 1/4. Catalyzes the condensation of the acetyl group of acetyl-CoA with 3-methyl-2-oxobutanoate (2-ketoisovalerate) to form 3-carboxy-3-hydroxy-4-methylpentanoate (2-isopropylmalate). In Azotobacter vinelandii (strain DJ / ATCC BAA-1303), this protein is 2-isopropylmalate synthase.